The sequence spans 149 residues: Sex-regulated protein janus-A (149 aa).

Position 46 (lysine 46) interacts with substrate. Histidine 77 (proton acceptor) is an active-site residue. Residue 118 to 120 (STG) participates in substrate binding.

Belongs to the janus family.

JanA and janB regulate somatic sex differentiation. In Drosophila pseudoobscura pseudoobscura (Fruit fly), this protein is Sex-regulated protein janus-A (janA).